Reading from the N-terminus, the 794-residue chain is Solute carrier family 26 member 9 (794 aa).

Topologically, residues 1-70 (MNKVRPRYII…WLPKYNIKGN (70 aa)) are cytoplasmic. A helical membrane pass occupies residues 71-96 (LLNDALGGISAGTIQIPQGMAFALLA). At 97–100 (NLPP) the chain is on the extracellular side. Residues 101–109 (VNGLYSSFF) traverse the membrane as a helical segment. Residues 110–129 (PLVVYFFMGGIPQMVPGTFA) are Cytoplasmic-facing. The helical transmembrane segment at 130 to 142 (VISIIVGNVCLKL) threads the bilayer. Over 143–160 (APESHFQNVTSNGTITNI) the chain is Extracellular. A helical membrane pass occupies residues 161-189 (EAMNTARMHISATLACLTAIIQIALSFVQ). The Cytoplasmic portion of the chain corresponds to 190-199 (FGFVAIYLSE). A helical transmembrane segment spans residues 200-222 (SFIRGFMTAAGLQILISVLKYIF). At 223–235 (GVSIPPYSGVLAI) the chain is on the extracellular side. Residues 236 to 244 (IYTFIDICK) constitute an intramembrane region (helical). Residues 245 to 252 (ELPKTNVA) lie on the Extracellular side of the membrane. A helical membrane pass occupies residues 253–273 (SLIFALISTVLLIIVKELNMK). Topologically, residues 274–284 (FMHKIRFPIPM) are cytoplasmic. A helical transmembrane segment spans residues 285 to 297 (EIIIVIVATAVSG). At 298-332 (SFKLPERYHMNVVGHIPLGFPSPTVPNVTQWDEMV) the chain is on the extracellular side. The chain crosses the membrane as a helical span at residues 333–356 (GTAFSLAIVGYVINLAMGRTLGAK). The Cytoplasmic portion of the chain corresponds to 357 to 363 (HGFDVDA). A helical membrane pass occupies residues 364 to 377 (NQEMLALGSGNFFG). Residues 378–388 (SFFFIHVICCA) lie on the Extracellular side of the membrane. The helical transmembrane segment at 389-398 (LSVTLAVDGA) threads the bilayer. At 399–403 (GGKSQ) the chain is on the cytoplasmic side. The chain crosses the membrane as a helical span at residues 404-417 (IASFFVMMSVMVTI). At 418 to 429 (LALGTYLNPLPK) the chain is on the extracellular side. The helical transmembrane segment at 430 to 455 (SVLGALIAVNLKNSLKQLSDPFYLWK) threads the bilayer. The Cytoplasmic segment spans residues 456–459 (KSKL). Residues 460–474 (DCLVWLVSFFSTFIL) traverse the membrane as a helical segment. At 475 to 477 (GLP) the chain is on the extracellular side. Residues 478-496 (YGLAVGVAFSILVVIFNTQ) form a helical membrane-spanning segment. At 497–794 (FRNGSSLNQV…MFQTEIQTAL (298 aa)) the chain is on the cytoplasmic side. Residues 517-739 (VYSKVQPIDG…ITVHDAVLYA (223 aa)) form the STAS domain.

It belongs to the SLC26A/SulP transporter (TC 2.A.53) family. Homodimer.

It localises to the cell membrane. It is found in the endomembrane system. The catalysed reaction is chloride(in) = chloride(out). It catalyses the reaction hydrogencarbonate(in) + chloride(out) = hydrogencarbonate(out) + chloride(in). Inhibited by ammonium and thiosulfate. Ion transporter that can act both as an ion channel and anion exchanger. Mainly acts as a chloride channel, which mediate uncoupled chloride anion transport in an alternate-access mechanism where a saturable binding site is alternately exposed to either one or the other side of the membrane. Also acts as a DIDS- and thiosulfate- sensitive anion exchanger the exchange of chloride for bicarbonate ions across the cell membrane. The sequence is that of Solute carrier family 26 member 9 (slc26a9) from Xenopus tropicalis (Western clawed frog).